The chain runs to 282 residues: 3-hydroxyanthranilate 3,4-dioxygenase (282 aa).

The domain A (catalytic) stretch occupies residues 1-160 (MAMAINVKKW…SKQYKSGKPD (160 aa)). Arg-43 contacts O2. The Fe cation site is built by His-47, Glu-53, and His-91. Residue Glu-53 coordinates substrate. Positions 95 and 105 each coordinate substrate. Positions 161–177 (PDQPKAKMPFCLSTEQV) are linker. The domain B stretch occupies residues 178–282 (MEPFSFQHWL…LSTSQVPLPM (105 aa)).

This sequence belongs to the 3-HAO family. In terms of assembly, monomer. It depends on Fe(2+) as a cofactor.

Its subcellular location is the cytoplasm. The protein resides in the cytosol. It catalyses the reaction 3-hydroxyanthranilate + O2 = (2Z,4Z)-2-amino-3-carboxymuconate 6-semialdehyde. Its pathway is cofactor biosynthesis; NAD(+) biosynthesis; quinolinate from L-kynurenine: step 3/3. Its function is as follows. Catalyzes the oxidative ring opening of 3-hydroxyanthranilate to 2-amino-3-carboxymuconate semialdehyde, which spontaneously cyclizes to quinolinate. In Xenopus laevis (African clawed frog), this protein is 3-hydroxyanthranilate 3,4-dioxygenase (haao).